Consider the following 47-residue polypeptide: Potamin-1 (47 aa).

Intrachain disulfides connect Cys3–Cys40, Cys6–Cys24, and Cys7–Cys36.

Its function is as follows. Inhibitor of serine proteases chymotrypsin, papain and trypsin. Has strong antifungal activity against C.albicans and R.solani. Has antibacterial activity against the Gram-positive bacterium C.michiganense, but lacks antibacterial activity against the Gram-positive bacterium S.aureus. Lacks hemolytic activity against human erythrocytes. This Solanum tuberosum (Potato) protein is Potamin-1.